Consider the following 157-residue polypeptide: Ribosome maturation factor RimP (157 aa).

It belongs to the RimP family.

The protein resides in the cytoplasm. In terms of biological role, required for maturation of 30S ribosomal subunits. In Synechococcus sp. (strain JA-3-3Ab) (Cyanobacteria bacterium Yellowstone A-Prime), this protein is Ribosome maturation factor RimP.